A 96-amino-acid polypeptide reads, in one-letter code: Co-chaperonin GroES (96 aa).

The protein belongs to the GroES chaperonin family. As to quaternary structure, heptamer of 7 subunits arranged in a ring. Interacts with the chaperonin GroEL.

The protein resides in the cytoplasm. Together with the chaperonin GroEL, plays an essential role in assisting protein folding. The GroEL-GroES system forms a nano-cage that allows encapsulation of the non-native substrate proteins and provides a physical environment optimized to promote and accelerate protein folding. GroES binds to the apical surface of the GroEL ring, thereby capping the opening of the GroEL channel. This is Co-chaperonin GroES from Vibrio atlanticus (strain LGP32) (Vibrio splendidus (strain Mel32)).